The chain runs to 226 residues: X-linked lymphocyte-regulated protein 3C (226 aa).

The segment at 1-66 (MSSRKRKATD…QARKEKQDLV (66 aa)) is disordered. The span at 8–18 (ATDTAGRHSRM) shows a compositional bias: basic and acidic residues. Residues 21–30 (NLSSDDSQNP) show a composition bias toward polar residues. Composition is skewed to basic and acidic residues over residues 39 to 48 (EVLDAGREDI) and 56 to 66 (QQARKEKQDLV). The stretch at 155–210 (ESLTLQKNRMEEFKSLCEKYLEKLEVLRDSRGNSIAEELRRLIATLEIKLLMLHNQ) forms a coiled coil.

The protein belongs to the XLR/SYCP3 family. As to expression, expressed in lymphoid cells.

The chain is X-linked lymphocyte-regulated protein 3C (Xlr3c) from Mus musculus (Mouse).